The primary structure comprises 159 residues: 3-hydroxyacyl-[acyl-carrier-protein] dehydratase FabZ (159 aa).

H58 is a catalytic residue.

This sequence belongs to the thioester dehydratase family. FabZ subfamily.

The protein localises to the cytoplasm. The enzyme catalyses a (3R)-hydroxyacyl-[ACP] = a (2E)-enoyl-[ACP] + H2O. In terms of biological role, involved in unsaturated fatty acids biosynthesis. Catalyzes the dehydration of short chain beta-hydroxyacyl-ACPs and long chain saturated and unsaturated beta-hydroxyacyl-ACPs. In Helicobacter pylori (strain G27), this protein is 3-hydroxyacyl-[acyl-carrier-protein] dehydratase FabZ.